Reading from the N-terminus, the 603-residue chain is ATP-dependent lipid A-core flippase (603 aa).

Helical transmembrane passes span 20 to 40 (LGYV…FLIF), 79 to 99 (LVYA…LGSF), 170 to 190 (VFLF…MLAI), and 269 to 289 (PMLQ…VLWL). The ABC transmembrane type-1 domain occupies 31-324 (LLSIVGFLIF…LSEVSSTVQR (294 aa)). An ABC transporter domain is found at 356–592 (LEVRNLSFRY…NGHYARLHAM (237 aa)). 390–397 (GRSGSGKS) contacts ATP.

Belongs to the ABC transporter superfamily. Lipid exporter (TC 3.A.1.106) family. In terms of assembly, homodimer.

It is found in the cell inner membrane. The catalysed reaction is ATP + H2O + lipid A-core oligosaccharideSide 1 = ADP + phosphate + lipid A-core oligosaccharideSide 2.. Its function is as follows. Involved in lipopolysaccharide (LPS) biosynthesis. Translocates lipid A-core from the inner to the outer leaflet of the inner membrane. Transmembrane domains (TMD) form a pore in the inner membrane and the ATP-binding domain (NBD) is responsible for energy generation. The protein is ATP-dependent lipid A-core flippase of Pseudomonas aeruginosa (strain ATCC 15692 / DSM 22644 / CIP 104116 / JCM 14847 / LMG 12228 / 1C / PRS 101 / PAO1).